A 231-amino-acid chain; its full sequence is MFGKILTTSLLIAMTFAAPSTEEGKSSKRRQYIAPLAGAAQVPRNPLFFAAPALPVAAAPALVRPAFAPVPVAAAPAFAPVPVAAPMVRPMLQQPAIVAPVAPVVAPVGQCPGGPSLPIECDPKRPWPQCPPQSYCYATNSVDIGPYFCCPIWSTYGAAWRPATPFYNYVPPVPANWPDVARMTANWPAAAVAMPLKARKQQKNEGDDEETEDEQKIGSAIDGWVERQAKL.

The first 17 residues, 1–17 (MFGKILTTSLLIAMTFA), serve as a signal peptide directing secretion. Residues 197-231 (KARKQQKNEGDDEETEDEQKIGSAIDGWVERQAKL) are disordered.

This is an uncharacterized protein from Caenorhabditis elegans.